A 247-amino-acid chain; its full sequence is Protein-L-isoaspartate O-methyltransferase 2 (247 aa).

Residue Ser-97 is part of the active site.

It belongs to the methyltransferase superfamily. L-isoaspartyl/D-aspartyl protein methyltransferase family.

Its subcellular location is the cytoplasm. The enzyme catalyses [protein]-L-isoaspartate + S-adenosyl-L-methionine = [protein]-L-isoaspartate alpha-methyl ester + S-adenosyl-L-homocysteine. Catalyzes the methyl esterification of L-isoaspartyl residues in peptides and proteins that result from spontaneous decomposition of normal L-aspartyl and L-asparaginyl residues. It plays a role in the repair and/or degradation of damaged proteins. The chain is Protein-L-isoaspartate O-methyltransferase 2 from Syntrophobacter fumaroxidans (strain DSM 10017 / MPOB).